The sequence spans 429 residues: O-methyltransferase phnC (429 aa).

D285 lines the S-adenosyl-L-methionine pocket.

The protein belongs to the class I-like SAM-binding methyltransferase superfamily. Cation-independent O-methyltransferase family. COMT subfamily.

The catalysed reaction is (2'R)-atrovenetin + S-adenosyl-L-methionine = deoxyherqueinone + S-adenosyl-L-homocysteine + H(+). The protein operates within secondary metabolite biosynthesis. In terms of biological role, O-methyltransferase; part of the gene cluster that mediates the biosynthesis of phenalenones such as herqueinone, compounds that have been reported to treat tumors, bacterial infections and/or mycoses, and rheumatic diseases. The non-reducing polyketide synthase phnA synthesizes the heptaketide backbone and cyclizes it into the angular, hemiketal-containing naphtho-gamma-pyrone prephenalenone. The product template (PT) domain of phnA catalyzes only the C4-C9 aldol condensation, which is unprecedented among known PT domains. The transformation of prephenalenone to phenalenones requires an FAD-dependent monooxygenase phnB, which catalyzes the C2 aromatic hydroxylation of prephenalenone and ring opening of the gamma-pyrone ring simultaneously. Subsequent intramolecular deprotonation of C3 phenolic oxygen accelerates phenalenone ring closure to yield the tricyclic phenalenone core with a C2 hydroxylation. The prenyltransferase phnF further catalyzes reverse C-prenylation of phenalenone by direct electrophilic substitution at C6, or possibly via first a forward O-prenylation of a neighboring phenol in phenalenone, followed by a Claisen rearrangement. The hydroalkoxylation enzyme phnH catalyzes the 5-exo-trig cyclization via acid catalysis after the spontaneous deprotonation of 7-OH, which leads to the formation of the dihydrobenzofuran atrovenetin. Atrovenetin is further converted to deoxyherqueinone by the O-methyltransferase phnC which can methylate C2-OH to stabilize the northern portion of the phenalenone core. Finally, the oxidoreductase phnG converts deoxyherqueinone to herqueinone via C6 hydroxylation. In Penicillium herquei, this protein is O-methyltransferase phnC.